The primary structure comprises 715 residues: Polyribonucleotide nucleotidyltransferase (715 aa).

Asp493 and Asp499 together coordinate Mg(2+). In terms of domain architecture, KH spans 560–619; that stretch reads PRMITIKINPEKIRDVIGKGGSVIRALTEETGTTIDISDDGVVTIASTNSDGMAEAKKRI. One can recognise an S1 motif domain in the interval 629–697; sequence GQVYEGTVLK…EKGRVRLSAK (69 aa).

It belongs to the polyribonucleotide nucleotidyltransferase family. Mg(2+) is required as a cofactor.

The protein resides in the cytoplasm. It carries out the reaction RNA(n+1) + phosphate = RNA(n) + a ribonucleoside 5'-diphosphate. In terms of biological role, involved in mRNA degradation. Catalyzes the phosphorolysis of single-stranded polyribonucleotides processively in the 3'- to 5'-direction. This chain is Polyribonucleotide nucleotidyltransferase, found in Burkholderia lata (strain ATCC 17760 / DSM 23089 / LMG 22485 / NCIMB 9086 / R18194 / 383).